We begin with the raw amino-acid sequence, 91 residues long: MNNALGLVETKGLVGAIEAADAMVKSANVQLVGYEKIGSGLITVMVRGDVGAVKAAVDAGSAAASAVGEVKSCHVIPRPHSDVEAILPKSA.

A BMC domain is found at 4-88 (ALGLVETKGL…PHSDVEAILP (85 aa)).

It belongs to the bacterial microcompartments protein family. In terms of assembly, homohexamer with a central pore. Interacts with PduP, which targets PduP to the BMC. Interacts with shell protein PduA.

The protein resides in the bacterial microcompartment. It participates in polyol metabolism; 1,2-propanediol degradation. Its function is as follows. One of the major shell proteins of the bacterial microcompartment (BMC) dedicated to 1,2-propanediol (1,2-PD) degradation. At least one of PduA or PduJ is required for BMC assembly; it must be encoded as the first gene in the pdu operon. Required for structural integrity of BMCs and to mitigate propionaldehyde toxicity, probably joins facets responsible for BMC closure. Probably the hub for binding multiple enzymes to the interior of the BMC. In terms of biological role, expression of a cosmid containing the full 21-gene pdu operon in E.coli allows E.coli to grow on 1,2-PD with the appearance of BMCs in its cytoplasm. Overexpression of this protein leads to an internal structure with a whorled architecture. Functionally, the 1,2-PD-specific bacterial microcompartment (BMC) concentrates low levels of 1,2-PD catabolic enzymes, concentrates volatile reaction intermediates thus enhancing pathway flux and keeps the level of toxic, mutagenic propionaldehyde low. This Citrobacter freundii protein is Bacterial microcompartment shell protein PduJ.